The sequence spans 206 residues: Max dimerization protein 3 (206 aa).

The interval 8-25 (IQVLLQAAEFLERREREA) is interaction with SIN3A and SIN3B. Disordered regions lie at residues 25-67 (AEHG…ELEK) and 146-171 (RERL…QEEL). One can recognise a bHLH domain in the interval 57 to 109 (SGRSVHNELEKRRRAQLKRCLERLKQQMPLGADCARYTTLSLLRRARMHIQKL).

Efficient DNA binding requires dimerization with another bHLH protein. Binds DNA as a heterodimer with MAX. Interacts with SIN3A AND SIN3B. Interacts with RNF17.

The protein resides in the nucleus. Functionally, transcriptional repressor. Binds with MAX to form a sequence-specific DNA-binding protein complex which recognizes the core sequence 5'-CAC[GA]TG-3'. Antagonizes MYC transcriptional activity by competing for MAX and suppresses MYC dependent cell transformation. The protein is Max dimerization protein 3 (MXD3) of Homo sapiens (Human).